Consider the following 220-residue polypeptide: Pyrrolidone-carboxylate peptidase (220 aa).

Catalysis depends on residues E80, C143, and H167.

Belongs to the peptidase C15 family. As to quaternary structure, homotetramer.

It is found in the cytoplasm. The catalysed reaction is Release of an N-terminal pyroglutamyl group from a polypeptide, the second amino acid generally not being Pro.. Functionally, removes 5-oxoproline from various penultimate amino acid residues except L-proline. This is Pyrrolidone-carboxylate peptidase (pcp) from Thermococcus litoralis (strain ATCC 51850 / DSM 5473 / JCM 8560 / NS-C).